A 577-amino-acid polypeptide reads, in one-letter code: Type I restriction enzyme MjaVII methylase subunit (577 aa).

Residues 251–256, 281–283, E306, and 335–336 each bind S-adenosyl-L-methionine; these read EVYTPV, SGT, and DS.

This sequence belongs to the N4/N6-methyltransferase family. As to quaternary structure, the type I restriction/modification system is composed of three polypeptides R, M and S.

The enzyme catalyses a 2'-deoxyadenosine in DNA + S-adenosyl-L-methionine = an N(6)-methyl-2'-deoxyadenosine in DNA + S-adenosyl-L-homocysteine + H(+). Its function is as follows. The subtype gamma methyltransferase (M) subunit of a type I restriction enzyme. The M and S subunits together form a methyltransferase (MTase) that methylates A-3 on the top and bottom strands of the sequence 5'-CAAN(7)TGG-3'. In the presence of the R subunit the complex can also act as an endonuclease, binding to the same target sequence but cutting the DNA some distance from this site. Whether the DNA is cut or modified depends on the methylation state of the target sequence. When the target site is unmodified, the DNA is cut. When the target site is hemimethylated, the complex acts as a maintenance MTase modifying the DNA so that both strands become methylated. After locating a non-methylated recognition site, the enzyme complex serves as a molecular motor that translocates DNA in an ATP-dependent manner until a collision occurs that triggers cleavage. The chain is Type I restriction enzyme MjaVII methylase subunit from Methanocaldococcus jannaschii (strain ATCC 43067 / DSM 2661 / JAL-1 / JCM 10045 / NBRC 100440) (Methanococcus jannaschii).